The chain runs to 411 residues: Glutamyl-tRNA reductase (411 aa).

Residues 49-52 (TCNR), Ser-99, 104-106 (ENE), and Gln-110 each bind substrate. Cys-50 acts as the Nucleophile in catalysis. 179-184 (GAGEAG) provides a ligand contact to NADP(+).

Belongs to the glutamyl-tRNA reductase family. In terms of assembly, homodimer.

The catalysed reaction is (S)-4-amino-5-oxopentanoate + tRNA(Glu) + NADP(+) = L-glutamyl-tRNA(Glu) + NADPH + H(+). The protein operates within porphyrin-containing compound metabolism; protoporphyrin-IX biosynthesis; 5-aminolevulinate from L-glutamyl-tRNA(Glu): step 1/2. Its function is as follows. Catalyzes the NADPH-dependent reduction of glutamyl-tRNA(Glu) to glutamate 1-semialdehyde (GSA). This chain is Glutamyl-tRNA reductase, found in Hyperthermus butylicus (strain DSM 5456 / JCM 9403 / PLM1-5).